Reading from the N-terminus, the 420-residue chain is D-tagatose-1,6-bisphosphate aldolase subunit GatZ (420 aa).

This sequence belongs to the GatZ/KbaZ family. GatZ subfamily. Forms a complex with GatY.

The protein operates within carbohydrate metabolism; D-tagatose 6-phosphate degradation; D-glyceraldehyde 3-phosphate and glycerone phosphate from D-tagatose 6-phosphate: step 2/2. In terms of biological role, component of the tagatose-1,6-bisphosphate aldolase GatYZ that is required for full activity and stability of the Y subunit. Could have a chaperone-like function for the proper and stable folding of GatY. When expressed alone, GatZ does not show any aldolase activity. Is involved in the catabolism of galactitol. The protein is D-tagatose-1,6-bisphosphate aldolase subunit GatZ of Escherichia coli O6:K15:H31 (strain 536 / UPEC).